We begin with the raw amino-acid sequence, 458 residues long: MSITKEFDTITAISTPLGEGAIGIVRLSGTDALAIAQSVFKGKNLEQVASHTINYGHIIDPKTGTIIDEVMVSVMLAPKTFTRENVVEINTHGGIAVTNEILQLLIRQGARMAEPGEFTKRAFLNGRVDLTQAEAVMDIIRAKTDKAMTIAVKQLDGSLSQLINDTRQEILNTLAQVEVNIDYPEYDDVEEMTTALLREKTQEFQSLLENLLRTAKRGKILREGLSTAIIGRPNVGKSSLLNNLLREDKAIVTDIAGTTRDVIEEYVNIKGVPLKLVDTAGIRETDDLVEQIGVERSKKALQEADLVLLVLNASEKLTDQDRALLNLSQGSNRIILLNKTDLEQKIELEQLPADLISISVLTNQNINLIEDRINQLFFDNAGLVEQDATYLSNARHISLIEKAVQSLEAVNDGLALGMPVDLLQVDLTRTWEILGEITGDAAPDELITQLFSQFCLGK.

Positions 26, 88, and 127 each coordinate (6S)-5-formyl-5,6,7,8-tetrahydrofolate. The TrmE-type G domain maps to 224–378 (GLSTAIIGRP…IEDRINQLFF (155 aa)). Residue Asn-234 coordinates K(+). GTP-binding positions include 234 to 239 (NVGKSS), 253 to 259 (TDIAGTT), and 278 to 281 (DTAG). Ser-238 contributes to the Mg(2+) binding site. Thr-253, Ile-255, and Thr-258 together coordinate K(+). Thr-259 provides a ligand contact to Mg(2+). Position 458 (Lys-458) interacts with (6S)-5-formyl-5,6,7,8-tetrahydrofolate.

Belongs to the TRAFAC class TrmE-Era-EngA-EngB-Septin-like GTPase superfamily. TrmE GTPase family. As to quaternary structure, homodimer. Heterotetramer of two MnmE and two MnmG subunits. The cofactor is K(+).

Its subcellular location is the cytoplasm. In terms of biological role, exhibits a very high intrinsic GTPase hydrolysis rate. Involved in the addition of a carboxymethylaminomethyl (cmnm) group at the wobble position (U34) of certain tRNAs, forming tRNA-cmnm(5)s(2)U34. The sequence is that of tRNA modification GTPase MnmE from Streptococcus pyogenes serotype M28 (strain MGAS6180).